A 279-amino-acid polypeptide reads, in one-letter code: Isopentenyl-diphosphate delta-isomerase idi1 (279 aa).

Lys78 is a binding site for substrate. Mg(2+) is bound by residues His82 and His93. One can recognise a Nudix hydrolase domain in the interval 91 to 249; sequence LLHRAFSVFL…GLKFTPWFKL (159 aa). The substrate site is built by Gln111 and Lys116. Cys128 is a catalytic residue. Residue Ser129 coordinates substrate. Residues 129-162 carry the Nudix box motif; the sequence is SHPLGIPGETGAELDAAVLGVKRAAQRKLDQELG. Mg(2+) contacts are provided by Glu191 and Glu193. The active site involves Glu193.

This sequence belongs to the IPP isomerase type 1 family. It depends on Mg(2+) as a cofactor.

It carries out the reaction isopentenyl diphosphate = dimethylallyl diphosphate. Its pathway is isoprenoid biosynthesis; dimethylallyl diphosphate biosynthesis; dimethylallyl diphosphate from isopentenyl diphosphate: step 1/1. Its function is as follows. Isopentenyl-diphosphate delta-isomerase; part of the second module of ergosterol biosynthesis pathway that includes the middle steps of the pathway. Idi1 catalyzes the 1,3-allylic rearrangement of isopentenyl (IPP) to its highly electrophilic allylic isomer, dimethylallyl diphosphate (DMAPP). The second module is carried out in the vacuole and involves the formation of farnesyl diphosphate, which is also an important intermediate in the biosynthesis of ubiquinone, dolichol, heme and prenylated proteins. Activity by the mevalonate kinase erg12 (AFUA_4G07780) first converts mevalonate into 5-phosphomevalonate. 5-phosphomevalonate is then further converted to 5-diphosphomevalonate by the phosphomevalonate kinase erg8 (AFUA_5G10680). The diphosphomevalonate decarboxylase mvd1 (AFUA_4G07130) then produces isopentenyl diphosphate. The isopentenyl-diphosphate delta-isomerase idi1 (AFUA_6G11160) then catalyzes the 1,3-allylic rearrangement of the homoallylic substrate isopentenyl (IPP) to its highly electrophilic allylic isomer, dimethylallyl diphosphate (DMAPP). Finally the farnesyl diphosphate synthase erg20 (AFUA_5G02450) catalyzes the sequential condensation of isopentenyl pyrophosphate with dimethylallyl pyrophosphate, and then with the resultant geranylpyrophosphate to the ultimate product farnesyl pyrophosphate. The polypeptide is Isopentenyl-diphosphate delta-isomerase idi1 (Aspergillus fumigatus (strain ATCC MYA-4609 / CBS 101355 / FGSC A1100 / Af293) (Neosartorya fumigata)).